Consider the following 334-residue polypeptide: Mevalonate kinase (334 aa).

110–120 (PVGAGLGSSAA) contributes to the ATP binding site. Aspartate 161 (proton acceptor) is an active-site residue.

Belongs to the GHMP kinase family. Mevalonate kinase subfamily. As to quaternary structure, homodimer. Mg(2+) serves as cofactor.

Its subcellular location is the cytoplasm. It catalyses the reaction (R)-mevalonate + ATP = (R)-5-phosphomevalonate + ADP + H(+). It participates in isoprenoid biosynthesis; isopentenyl diphosphate biosynthesis via mevalonate pathway; isopentenyl diphosphate from (R)-mevalonate: step 1/3. Catalyzes the phosphorylation of (R)-mevalonate (MVA) to (R)-mevalonate 5-phosphate (MVAP). Functions in the mevalonate (MVA) pathway leading to isopentenyl diphosphate (IPP), a key precursor for the biosynthesis of isoprenoid compounds such as archaeal membrane lipids. In Pyrococcus furiosus (strain ATCC 43587 / DSM 3638 / JCM 8422 / Vc1), this protein is Mevalonate kinase.